The following is a 55-amino-acid chain: Large ribosomal subunit protein bL33 (55 aa).

Over residues 1–11 (MAKGGREKIKL) the composition is skewed to basic and acidic residues. Residues 1-26 (MAKGGREKIKLESTAGTGHFYTTDKN) are disordered.

It belongs to the bacterial ribosomal protein bL33 family.

This Methylibium petroleiphilum (strain ATCC BAA-1232 / LMG 22953 / PM1) protein is Large ribosomal subunit protein bL33.